Here is a 207-residue protein sequence, read N- to C-terminus: Probable nicotinate-nucleotide adenylyltransferase (207 aa).

This sequence belongs to the NadD family.

The catalysed reaction is nicotinate beta-D-ribonucleotide + ATP + H(+) = deamido-NAD(+) + diphosphate. It functions in the pathway cofactor biosynthesis; NAD(+) biosynthesis; deamido-NAD(+) from nicotinate D-ribonucleotide: step 1/1. Catalyzes the reversible adenylation of nicotinate mononucleotide (NaMN) to nicotinic acid adenine dinucleotide (NaAD). The sequence is that of Probable nicotinate-nucleotide adenylyltransferase from Synechococcus sp. (strain JA-3-3Ab) (Cyanobacteria bacterium Yellowstone A-Prime).